Reading from the N-terminus, the 419-residue chain is DNA primase DnaG (419 aa).

Residues 174–260 (DAIIVVEGRS…EVEDLEKDEV (87 aa)) enclose the Toprim domain. Glu-180, Asp-222, and Asp-224 together coordinate Mg(2+). The tract at residues 277 to 314 (HNILSESDSKNSHKKHNGKHNNKHSNNKHQQHETKVKE) is disordered. Residues 288 to 305 (SHKKHNGKHNNKHSNNKH) show a composition bias toward basic residues.

The protein belongs to the archaeal DnaG primase family. In terms of assembly, forms a ternary complex with MCM helicase and DNA. Component of the archaeal exosome complex. The cofactor is Mg(2+).

The catalysed reaction is ssDNA + n NTP = ssDNA/pppN(pN)n-1 hybrid + (n-1) diphosphate.. In terms of biological role, RNA polymerase that catalyzes the synthesis of short RNA molecules used as primers for DNA polymerase during DNA replication. Also part of the exosome, which is a complex involved in RNA degradation. Acts as a poly(A)-binding protein that enhances the interaction between heteromeric, adenine-rich transcripts and the exosome. This Methanobrevibacter smithii (strain ATCC 35061 / DSM 861 / OCM 144 / PS) protein is DNA primase DnaG.